Reading from the N-terminus, the 209-residue chain is Uracil phosphoribosyltransferase (209 aa).

Residues R79, R104, and D131–S139 contribute to the 5-phospho-alpha-D-ribose 1-diphosphate site. Uracil-binding positions include I194 and G199–A201. D200 contacts 5-phospho-alpha-D-ribose 1-diphosphate.

This sequence belongs to the UPRTase family. It depends on Mg(2+) as a cofactor.

It carries out the reaction UMP + diphosphate = 5-phospho-alpha-D-ribose 1-diphosphate + uracil. Its pathway is pyrimidine metabolism; UMP biosynthesis via salvage pathway; UMP from uracil: step 1/1. With respect to regulation, allosterically activated by GTP. Functionally, catalyzes the conversion of uracil and 5-phospho-alpha-D-ribose 1-diphosphate (PRPP) to UMP and diphosphate. This Sinorhizobium medicae (strain WSM419) (Ensifer medicae) protein is Uracil phosphoribosyltransferase.